The primary structure comprises 97 residues: Aspartyl/glutamyl-tRNA(Asn/Gln) amidotransferase subunit C (97 aa).

The protein belongs to the GatC family. Heterotrimer of A, B and C subunits.

The enzyme catalyses L-glutamyl-tRNA(Gln) + L-glutamine + ATP + H2O = L-glutaminyl-tRNA(Gln) + L-glutamate + ADP + phosphate + H(+). It carries out the reaction L-aspartyl-tRNA(Asn) + L-glutamine + ATP + H2O = L-asparaginyl-tRNA(Asn) + L-glutamate + ADP + phosphate + 2 H(+). In terms of biological role, allows the formation of correctly charged Asn-tRNA(Asn) or Gln-tRNA(Gln) through the transamidation of misacylated Asp-tRNA(Asn) or Glu-tRNA(Gln) in organisms which lack either or both of asparaginyl-tRNA or glutaminyl-tRNA synthetases. The reaction takes place in the presence of glutamine and ATP through an activated phospho-Asp-tRNA(Asn) or phospho-Glu-tRNA(Gln). The chain is Aspartyl/glutamyl-tRNA(Asn/Gln) amidotransferase subunit C from Nostoc punctiforme (strain ATCC 29133 / PCC 73102).